Reading from the N-terminus, the 294-residue chain is Bifunctional protein FolD (294 aa).

Residues Gly-166–Ser-168, Ser-191, and Ile-232 contribute to the NADP(+) site.

This sequence belongs to the tetrahydrofolate dehydrogenase/cyclohydrolase family. In terms of assembly, homodimer.

It catalyses the reaction (6R)-5,10-methylene-5,6,7,8-tetrahydrofolate + NADP(+) = (6R)-5,10-methenyltetrahydrofolate + NADPH. The catalysed reaction is (6R)-5,10-methenyltetrahydrofolate + H2O = (6R)-10-formyltetrahydrofolate + H(+). It functions in the pathway one-carbon metabolism; tetrahydrofolate interconversion. Its function is as follows. Catalyzes the oxidation of 5,10-methylenetetrahydrofolate to 5,10-methenyltetrahydrofolate and then the hydrolysis of 5,10-methenyltetrahydrofolate to 10-formyltetrahydrofolate. The chain is Bifunctional protein FolD from Bradyrhizobium diazoefficiens (strain JCM 10833 / BCRC 13528 / IAM 13628 / NBRC 14792 / USDA 110).